A 504-amino-acid polypeptide reads, in one-letter code: Probable cytosol aminopeptidase (504 aa).

Lys-274 and Asp-279 together coordinate Mn(2+). Lys-286 is a catalytic residue. Mn(2+)-binding residues include Asp-297, Asp-356, and Glu-358. Residue Arg-360 is part of the active site.

Belongs to the peptidase M17 family. The cofactor is Mn(2+).

It localises to the cytoplasm. The enzyme catalyses Release of an N-terminal amino acid, Xaa-|-Yaa-, in which Xaa is preferably Leu, but may be other amino acids including Pro although not Arg or Lys, and Yaa may be Pro. Amino acid amides and methyl esters are also readily hydrolyzed, but rates on arylamides are exceedingly low.. It catalyses the reaction Release of an N-terminal amino acid, preferentially leucine, but not glutamic or aspartic acids.. Its function is as follows. Presumably involved in the processing and regular turnover of intracellular proteins. Catalyzes the removal of unsubstituted N-terminal amino acids from various peptides. The chain is Probable cytosol aminopeptidase from Blochmanniella floridana.